The chain runs to 690 residues: MDDSSLYIHRELSQLQFNIRVLEQALDESYPLLERLKFLLIFSSNLDEFFEIRIAGLKKQITFAREQAGADGLLPHQALARISELVHEQVSRQYRILNETLLPELAKHQIRFIRRRHWTLKIKTWVRRFFRDEIAPIITPIGLDPTHPFPLLVNKSLNFIVELEGMDAFGRDSGLAIIPAPRLLPRIIRLPEDVGGEGDNYVFLSSMIHAHADDLFPGMKVKGCYQFRLTRNADLSVDTEDVEDLARALRGELFSRRYGDAVRLEVVDTCPQNLTNYLLKQFGLSESELYKVSGPVNLTRLFSVTGLESHPELQYPPFTPAIPRLLQKKENLFNVLSKLDVLLMHPFESFTPVIDLLRQAAKDPNVLAIKQTLYRSGANSEIVDALVEAARNGKEVTAVIELRARFDEESNLQLASRLQQAGAVVIYGVVGFKTHAKMMLILRREDGELRRYAHLGTGNYHAGNARLYTDYSLLTADVALCEDLHKLFNQLIGMGKTLRMKKLLHAPFTLKKNLLEMINREAAQAALGQPAHIMAKVNSLTDPKVIRALYKASQAGVRIDLVVRGMCCLRPGIPGVSHNIHVRSIIGRFLEHSRIYYFLNGGDEKLYLSSADWMERNLDMRVETCFPVEGKKLVQRVKKELETYLTDNTQAWVLQADGSYQRLSPTGNQNPRNTQATLLEKLAAPVLTAR.

Asn-45 is a binding site for ATP. Mg(2+)-binding residues include Arg-375 and Arg-405. Catalysis depends on His-435, which acts as the Phosphohistidine intermediate. Residues Tyr-468, Arg-564, and His-592 each coordinate ATP.

The protein belongs to the polyphosphate kinase 1 (PPK1) family. Requires Mg(2+) as cofactor. Post-translationally, an intermediate of this reaction is the autophosphorylated ppk in which a phosphate is covalently linked to a histidine residue through a N-P bond.

It catalyses the reaction [phosphate](n) + ATP = [phosphate](n+1) + ADP. Functionally, catalyzes the reversible transfer of the terminal phosphate of ATP to form a long-chain polyphosphate (polyP). The chain is Polyphosphate kinase from Pseudomonas aeruginosa (strain ATCC 15692 / DSM 22644 / CIP 104116 / JCM 14847 / LMG 12228 / 1C / PRS 101 / PAO1).